The following is a 161-amino-acid chain: Large ribosomal subunit protein bL17 (161 aa).

A disordered region spans residues lysine 126 to glutamate 161. Over residues lysine 129–lysine 138 the composition is skewed to basic residues. Residues glutamate 142–threonine 152 are compositionally biased toward low complexity.

The protein belongs to the bacterial ribosomal protein bL17 family. In terms of assembly, part of the 50S ribosomal subunit. Contacts protein L32.

The protein is Large ribosomal subunit protein bL17 of Bacteroides fragilis (strain ATCC 25285 / DSM 2151 / CCUG 4856 / JCM 11019 / LMG 10263 / NCTC 9343 / Onslow / VPI 2553 / EN-2).